A 604-amino-acid chain; its full sequence is Solute carrier family 23 member 1 (604 aa).

Positions 1 to 29 (MKAQEDPGSSKQHECPDSAGTSTRDQQAP) are disordered. Topologically, residues 1 to 59 (MKAQEDPGSSKQHECPDSAGTSTRDQQAPLPAEPKFDMLYKIEDVPPWYLCILLGFQHY) are cytoplasmic. The helical transmembrane segment at 60 to 80 (LTCFSGTIAVPFLLAEALCVG) threads the bilayer. Residues 81–88 (RDQHMISQ) lie on the Extracellular side of the membrane. The helical transmembrane segment at 89–109 (LIGTIFTCVGITTLIQTTVGI) threads the bilayer. A topological domain (cytoplasmic) is located at residue arginine 110. A helical transmembrane segment spans residues 111 to 131 (LPLFQASAFAFLVPAKAILAL). Residues 132-166 (ERWKCPPEEEIYGNWSMPLNTSHIWHPRIREVQGA) lie on the Extracellular side of the membrane. Asparagine 145 and asparagine 151 each carry an N-linked (GlcNAc...) asparagine glycan. A helical membrane pass occupies residues 167–187 (IMVSSVVEVVIGLLGLPGALL). Residues 188–214 (SYIGPLTVTPTVSLIGLSVFQAAGDRA) lie on the Cytoplasmic side of the membrane. A helical membrane pass occupies residues 215–232 (GSHWGISACSILLIVLFS). The Extracellular portion of the chain corresponds to 233 to 236 (QYLR). Residues 237–250 (NLTFLLPVYRWGKG) constitute an intramembrane region (helical). Topologically, residues 251–257 (LTLFRIQ) are extracellular. A helical membrane pass occupies residues 258-278 (IFKMFPIVLAIMTVWLLCYVL). Over 279–319 (TLTDVLPADPTVYGFQARTDARGDIMAISPWIRIPYPCQWG) the chain is Cytoplasmic. Residues 320 to 340 (LPTVTVAAVLGMFSATLAGII) form a helical membrane-spanning segment. Residues 341–365 (ESIGDYYACARLAGAPPPPVHAINR) lie on the Extracellular side of the membrane. The chain crosses the membrane as a helical span at residues 366 to 386 (GIFTEGVCCIIAGLLGTGNGS). Residues 387 to 409 (TSSSPNIGVLGITKVGSRRVVQY) lie on the Cytoplasmic side of the membrane. Residues 410–430 (GAGIMLILGAIGKFTALFASL) traverse the membrane as a helical segment. Topologically, residues 431–433 (PDP) are extracellular. Residues 434–454 (ILGGMFCTLFGMITAVGLSNL) traverse the membrane as a helical segment. Residues 455 to 464 (QFVDMNSSRN) are Cytoplasmic-facing. The chain crosses the membrane as a helical span at residues 465–485 (LFVLGFSMFFGLTLPNYLDSN). Topologically, residues 486–497 (PGAINTGVPEVD) are extracellular. The helical transmembrane segment at 498–518 (QILTVLLTTEMFVGGCLAFIL) threads the bilayer. Residues 519–604 (DNTVPGSPEE…TETGSVCTKV (86 aa)) are Cytoplasmic-facing. Position 597 is a phosphothreonine (threonine 597). Position 599 is a phosphoserine (serine 599). Position 602 is a phosphothreonine (threonine 602).

It belongs to the nucleobase:cation symporter-2 (NCS2) (TC 2.A.40) family. Post-translationally, phosphorylated. In terms of tissue distribution, highly expressed in the straight segment of proximal tubules in the kidney, in intestine and liver. Detected in epithelial cells of the bronchiole and epididymis.

The protein resides in the cell membrane. It catalyses the reaction L-ascorbate(out) + 2 Na(+)(out) = L-ascorbate(in) + 2 Na(+)(in). The enzyme catalyses urate(out) + 2 Na(+)(out) = urate(in) + 2 Na(+)(in). Functionally, sodium/ascorbate cotransporter. Mediates electrogenic uptake of vitamin C, with a stoichiometry of 2 Na(+) for each ascorbate. Has retained some ancestral activity toward nucleobases such as urate, an oxidized purine. Low-affinity high-capacity sodium:urate cotransporter, may regulate serum urate levels by serving as a renal urate re-absorber. In Rattus norvegicus (Rat), this protein is Solute carrier family 23 member 1 (Slc23a1).